The chain runs to 576 residues: FtsZ-localized protein C (576 aa).

Interacts with FtsZ filaments.

It is found in the cytoplasm. The protein resides in the cell inner membrane. Functionally, membrane anchor for FtsZ. Binds and recruits FtsZ polymers to membranes early in the cell cycle. May also improve the efficiency of cytokinesis through the regulation of cell wall hydrolysis. In Caulobacter vibrioides (strain NA1000 / CB15N) (Caulobacter crescentus), this protein is FtsZ-localized protein C.